The following is a 109-amino-acid chain: Nucleoid-associated protein Sama_1311 (109 aa).

The protein belongs to the YbaB/EbfC family. In terms of assembly, homodimer.

The protein localises to the cytoplasm. It localises to the nucleoid. Binds to DNA and alters its conformation. May be involved in regulation of gene expression, nucleoid organization and DNA protection. This chain is Nucleoid-associated protein Sama_1311, found in Shewanella amazonensis (strain ATCC BAA-1098 / SB2B).